The chain runs to 368 residues: Apolipoprotein A-V (368 aa).

The signal sequence occupies residues 1 to 20 (MAAVITWALALLAVFASTQA). Position 52 is a phosphoserine (Ser52). Residues 231–255 (TRKAKDLHTSIQRNLDQLRDELSAF) are a coiled coil. Residues 305 to 333 (EEIQHQLAPPPPSHSAFAPELGHSDSNKA) form a disordered region.

Belongs to the apolipoprotein A1/A4/E family. As to quaternary structure, interacts with GPIHBP1. Interacts with SORL1; this interaction leads to APOA5 internalization and sorting either to lysosomes and degradation, or to the trans-Golgi network. Phosphorylated by FAM20C in the extracellular medium. Liver.

The protein resides in the secreted. It is found in the early endosome. Its subcellular location is the late endosome. It localises to the golgi apparatus. The protein localises to the trans-Golgi network. In terms of biological role, minor apolipoprotein mainly associated with HDL and to a lesser extent with VLDL. May also be associated with chylomicrons. Important determinant of plasma triglyceride (TG) levels by both being a potent stimulator of apo-CII lipoprotein lipase (LPL) TG hydrolysis and an inhibitor of the hepatic VLDL-TG production rate (without affecting the VLDL-apoB production rate). Activates poorly lecithin:cholesterol acyltransferase (LCAT) and does not enhance efflux of cholesterol from macrophages. Binds heparin. The sequence is that of Apolipoprotein A-V (Apoa5) from Mus musculus (Mouse).